Here is a 436-residue protein sequence, read N- to C-terminus: Alpha-2 adrenergic receptor (436 aa).

Residues 1 to 27 (MDVTQSNATKDDANITVTPWPYTETAA) lie on the Extracellular side of the membrane. Residues asparagine 7 and asparagine 14 are each glycosylated (N-linked (GlcNAc...) asparagine). The helical transmembrane segment at 28 to 52 (AFIILVVSVIILVSIVGNVLVIVAV) threads the bilayer. Residues 53–64 (LTSRALRAPQNL) are Cytoplasmic-facing. The helical transmembrane segment at 65 to 90 (FLVSLACADILVATLVIPFSLANEIM) threads the bilayer. Residues 91–100 (GYWFFGSTWC) lie on the Extracellular side of the membrane. Cysteine 100 and cysteine 173 are joined by a disulfide. The chain crosses the membrane as a helical span at residues 101–123 (AFYLALDVLFCTSSIVHLCAISL). Over 124–144 (DRYWSVTKAVSYNLKRTPKRI) the chain is Cytoplasmic. The chain crosses the membrane as a helical span at residues 145-167 (KSMIAVVWVISAVISFPPLIMTK). Topologically, residues 168 to 178 (HDEKECLINDE) are extracellular. Residues 179–202 (TWYILSSSLVSFFAPGFIMITVYC) form a helical membrane-spanning segment. Residues 203–329 (KIYRVAKQRS…QMREKRFTFV (127 aa)) lie on the Cytoplasmic side of the membrane. The tract at residues 238–280 (KFEKESPSSNSSESNQRQEELDDIDLEESATSDNKPKSSRFSN) is disordered. The span at 257-267 (ELDDIDLEESA) shows a compositional bias: acidic residues. The helical transmembrane segment at 330–353 (LTVVMGVFVLCWFPFFFTYSLHAI) threads the bilayer. The Extracellular portion of the chain corresponds to 354–366 (CGDSCEPPEALFK). The helical transmembrane segment at 367-387 (LFFWIGYCNSSVNPIIYTIFN) threads the bilayer. Topologically, residues 388 to 436 (RDFRKAFKKICLLDCAAHLRDSCLGTLGRLNAKCIFECHQKSNQEETAN) are cytoplasmic.

Belongs to the G-protein coupled receptor 1 family.

It localises to the cell membrane. Alpha-2 adrenergic receptors mediate the catecholamine-induced inhibition of adenylate cyclase through the action of G proteins. This is Alpha-2 adrenergic receptor from Carassius auratus (Goldfish).